A 239-amino-acid polypeptide reads, in one-letter code: Phosphoribosylaminoimidazole-succinocarboxamide synthase (239 aa).

Belongs to the SAICAR synthetase family.

It catalyses the reaction 5-amino-1-(5-phospho-D-ribosyl)imidazole-4-carboxylate + L-aspartate + ATP = (2S)-2-[5-amino-1-(5-phospho-beta-D-ribosyl)imidazole-4-carboxamido]succinate + ADP + phosphate + 2 H(+). Its pathway is purine metabolism; IMP biosynthesis via de novo pathway; 5-amino-1-(5-phospho-D-ribosyl)imidazole-4-carboxamide from 5-amino-1-(5-phospho-D-ribosyl)imidazole-4-carboxylate: step 1/2. The sequence is that of Phosphoribosylaminoimidazole-succinocarboxamide synthase from Campylobacter hominis (strain ATCC BAA-381 / DSM 21671 / CCUG 45161 / LMG 19568 / NCTC 13146 / CH001A).